We begin with the raw amino-acid sequence, 158 residues long: Phosphopantetheine adenylyltransferase (158 aa).

Thr10 is a substrate binding site. ATP is bound by residues Thr10 to Phe11 and His18. 3 residues coordinate substrate: Lys42, Leu74, and Arg88. Residues Gly89 to Arg91, Glu99, and Trp124 to Thr130 contribute to the ATP site.

Belongs to the bacterial CoaD family. In terms of assembly, homohexamer. The cofactor is Mg(2+).

The protein localises to the cytoplasm. The enzyme catalyses (R)-4'-phosphopantetheine + ATP + H(+) = 3'-dephospho-CoA + diphosphate. The protein operates within cofactor biosynthesis; coenzyme A biosynthesis; CoA from (R)-pantothenate: step 4/5. Its function is as follows. Reversibly transfers an adenylyl group from ATP to 4'-phosphopantetheine, yielding dephospho-CoA (dPCoA) and pyrophosphate. In Actinobacillus pleuropneumoniae serotype 3 (strain JL03), this protein is Phosphopantetheine adenylyltransferase.